The primary structure comprises 140 residues: Type II secretion system core protein G (140 aa).

A propeptide spans 1–6 (MQRQRG) (leader sequence). Phe-7 is modified (N-methylphenylalanine). Residues 7 to 27 (FTLLEIMVVIVILGVLASLVV) traverse the membrane as a helical segment. Positions 120 to 140 (LGPDGVPESNDDIGNWTIGKK) are disordered.

This sequence belongs to the GSP G family. In terms of assembly, type II secretion system is composed of four main components: the outer membrane complex, the inner membrane complex, the cytoplasmic secretion ATPase and the periplasm-spanning pseudopilus. Forms homomultimers. Post-translationally, cleaved by the prepilin peptidase. In terms of processing, methylated by prepilin peptidase at the amino group of the N-terminal phenylalanine once the leader sequence is cleaved.

It is found in the cell inner membrane. In terms of biological role, core component of the type II secretion system required for the energy-dependent secretion of extracellular factors such as proteases and toxins from the periplasm. Pseudopilin (pilin-like) protein that polymerizes to form the pseudopilus. Further polymerization triggers pseudopilus growth. The polypeptide is Type II secretion system core protein G (pulG) (Klebsiella pneumoniae).